Reading from the N-terminus, the 228-residue chain is Protein ARV 2 (228 aa).

Transmembrane regions (helical) follow at residues 37–57 (EVAD…LILH) and 80–100 (LLWK…LLLR). A glycan (N-linked (GlcNAc...) asparagine) is linked at Asn107. 3 consecutive transmembrane segments (helical) span residues 123–143 (VLSA…LMLV), 150–170 (ILLT…MPVW), and 176–196 (VIFI…KVMT).

The protein belongs to the ARV1 family. In terms of tissue distribution, restricted to tissues in which cells are actively dividing or expanding. Mostly expressed in roots and flowers, and, to a lower extent, in stems and leaves.

It localises to the endoplasmic reticulum membrane. Its function is as follows. Mediator of sterol homeostasis involved in sterol uptake, trafficking and distribution into membranes. Also regulates the sphingolipid metabolism. This chain is Protein ARV 2, found in Arabidopsis thaliana (Mouse-ear cress).